The chain runs to 314 residues: tRNA uridine(34) hydroxylase (314 aa).

A Rhodanese domain is found at 140-234; it reads SRDDVILVDT…YLEETPAEES (95 aa). The active-site Cysteine persulfide intermediate is the Cys-194.

It belongs to the TrhO family.

The catalysed reaction is uridine(34) in tRNA + AH2 + O2 = 5-hydroxyuridine(34) in tRNA + A + H2O. In terms of biological role, catalyzes oxygen-dependent 5-hydroxyuridine (ho5U) modification at position 34 in tRNAs. This chain is tRNA uridine(34) hydroxylase, found in Acinetobacter baylyi (strain ATCC 33305 / BD413 / ADP1).